Consider the following 210-residue polypeptide: Na(+)-translocating NADH-quinone reductase subunit D (210 aa).

6 consecutive transmembrane segments (helical) span residues 11 to 31, 42 to 62, 70 to 90, 103 to 123, 131 to 151, and 178 to 198; these read ILAPVLDNNPIALQVLGVCSA, FVMTLAVMFVTAFSNLFVSLI, VRIIVQMAIIASLVIVVDQIL, VFVGLIITNCIVMGRAEAFAM, FIDGIGNGLGYGFVLITVGFF, and NGLMLLAPSAFFLIGFMIWAI.

This sequence belongs to the NqrDE/RnfAE family. Composed of six subunits; NqrA, NqrB, NqrC, NqrD, NqrE and NqrF.

It is found in the cell inner membrane. It catalyses the reaction a ubiquinone + n Na(+)(in) + NADH + H(+) = a ubiquinol + n Na(+)(out) + NAD(+). Its function is as follows. NQR complex catalyzes the reduction of ubiquinone-1 to ubiquinol by two successive reactions, coupled with the transport of Na(+) ions from the cytoplasm to the periplasm. NqrA to NqrE are probably involved in the second step, the conversion of ubisemiquinone to ubiquinol. The polypeptide is Na(+)-translocating NADH-quinone reductase subunit D (Vibrio anguillarum (Listonella anguillarum)).